A 347-amino-acid chain; its full sequence is Lipoyl synthase (347 aa).

7 residues coordinate [4Fe-4S] cluster: Cys-55, Cys-60, Cys-66, Cys-81, Cys-85, Cys-88, and Ser-292. In terms of domain architecture, Radical SAM core spans 67 to 281 (WEDREATFLI…RDYGHDIGFA (215 aa)).

This sequence belongs to the radical SAM superfamily. Lipoyl synthase family. [4Fe-4S] cluster serves as cofactor.

It is found in the cytoplasm. The catalysed reaction is [[Fe-S] cluster scaffold protein carrying a second [4Fe-4S](2+) cluster] + N(6)-octanoyl-L-lysyl-[protein] + 2 oxidized [2Fe-2S]-[ferredoxin] + 2 S-adenosyl-L-methionine + 4 H(+) = [[Fe-S] cluster scaffold protein] + N(6)-[(R)-dihydrolipoyl]-L-lysyl-[protein] + 4 Fe(3+) + 2 hydrogen sulfide + 2 5'-deoxyadenosine + 2 L-methionine + 2 reduced [2Fe-2S]-[ferredoxin]. It functions in the pathway protein modification; protein lipoylation via endogenous pathway; protein N(6)-(lipoyl)lysine from octanoyl-[acyl-carrier-protein]: step 2/2. In terms of biological role, catalyzes the radical-mediated insertion of two sulfur atoms into the C-6 and C-8 positions of the octanoyl moiety bound to the lipoyl domains of lipoate-dependent enzymes, thereby converting the octanoylated domains into lipoylated derivatives. The sequence is that of Lipoyl synthase from Corynebacterium kroppenstedtii (strain DSM 44385 / JCM 11950 / CIP 105744 / CCUG 35717).